Here is a 129-residue protein sequence, read N- to C-terminus: Large ribosomal subunit protein uL22 (129 aa).

It belongs to the universal ribosomal protein uL22 family. As to quaternary structure, part of the 50S ribosomal subunit.

In terms of biological role, this protein binds specifically to 23S rRNA; its binding is stimulated by other ribosomal proteins, e.g. L4, L17, and L20. It is important during the early stages of 50S assembly. It makes multiple contacts with different domains of the 23S rRNA in the assembled 50S subunit and ribosome. Its function is as follows. The globular domain of the protein is located near the polypeptide exit tunnel on the outside of the subunit, while an extended beta-hairpin is found that lines the wall of the exit tunnel in the center of the 70S ribosome. This chain is Large ribosomal subunit protein uL22, found in Metamycoplasma hominis (strain ATCC 23114 / DSM 25592 / NBRC 14850 / NCTC 10111 / PG21) (Mycoplasma hominis).